Consider the following 732-residue polypeptide: Prolyl 3-hydroxylase 3 (732 aa).

An N-terminal signal peptide occupies residues 1 to 19 (MLRLLRLLLLLLLPPPGSP). The segment covering 15-25 (PPGSPEPPEPP) has biased composition (pro residues). The tract at residues 15–35 (PPGSPEPPEPPGLAQLSPGSP) is disordered. 4 TPR repeats span residues 39 to 72 (PDLLYADGLRAYSAGAWAPAVALLREALRSRAAL), 152 to 185 (REPYNYLQRAYYQLKKLDLAASAAHTFFVANPTH), 214 to 247 (YWAAYDTGLELLEQREAALALPQLEEALQGSLAH), and 312 to 345 (LSQLRRLHEAYAQVGNMSQAMENVLSVLLFYPED). N-linked (GlcNAc...) asparagine glycans are attached at residues Asn327 and Asn458. One can recognise a Fe2OG dioxygenase domain in the interval 557–671 (THLVCRSAIE…RCALALWHTW (115 aa)). His580, Asp582, and His652 together coordinate Fe cation. Arg662 is a catalytic residue. A coiled-coil region spans residues 674-703 (EHSEQEWTEAKELLQEEEEEEEEEDILSRD). Over residues 676 to 687 (SEQEWTEAKELL) the composition is skewed to basic and acidic residues. A disordered region spans residues 676-732 (SEQEWTEAKELLQEEEEEEEEEDILSRDPSPEPPSHKLQRVQEKAGKPRRVRVREEL). The segment covering 688–698 (QEEEEEEEEED) has biased composition (acidic residues). The segment covering 722-732 (KPRRVRVREEL) has biased composition (basic residues). The short motif at 729 to 732 (REEL) is the Prevents secretion from ER element.

Belongs to the leprecan family. In terms of assembly, identified in a complex with PLOD1 and P3H4. It depends on Fe cation as a cofactor. L-ascorbate serves as cofactor. Detected in kidney (at protein level).

It is found in the endoplasmic reticulum. The catalysed reaction is L-prolyl-[collagen] + 2-oxoglutarate + O2 = trans-3-hydroxy-L-prolyl-[collagen] + succinate + CO2. Its function is as follows. Part of a complex composed of PLOD1, P3H3 and P3H4 that catalyzes hydroxylation of lysine residues in collagen alpha chains and is required for normal assembly and cross-linkling of collagen fibrils. Required for normal hydroxylation of lysine residues in type I collagen chains in skin, bone, tendon, aorta and cornea. Required for normal skin stability via its role in hydroxylation of lysine residues in collagen alpha chains and in collagen fibril assembly. Apparently not required for normal prolyl 3-hydroxylation on collagen chains, possibly because it functions redundantly with other prolyl 3-hydroxylases. The sequence is that of Prolyl 3-hydroxylase 3 from Mus musculus (Mouse).